Here is a 150-residue protein sequence, read N- to C-terminus: MKWIFLLLSLLIYSCQELPKKYQTPEGKKILEKYKKQYVKGVVILDDKLKEKIPKGERYLIIAVMKEGSSRPVAVLRVKNPDFPYRFKITGKHKIVPEDFIEGKLMLTARISKEPTAGFKRGDLYGFAQAQAGDEDVKILINQVFEEKEK.

This is an uncharacterized protein from Aquifex aeolicus (strain VF5).